The following is a 295-amino-acid chain: Bifunctional protein FolD 1 (295 aa).

NADP(+) is bound by residues 165-167, Ile-190, and Ile-231; that span reads GKS.

It belongs to the tetrahydrofolate dehydrogenase/cyclohydrolase family. Homodimer.

The catalysed reaction is (6R)-5,10-methylene-5,6,7,8-tetrahydrofolate + NADP(+) = (6R)-5,10-methenyltetrahydrofolate + NADPH. It catalyses the reaction (6R)-5,10-methenyltetrahydrofolate + H2O = (6R)-10-formyltetrahydrofolate + H(+). Its pathway is one-carbon metabolism; tetrahydrofolate interconversion. In terms of biological role, catalyzes the oxidation of 5,10-methylenetetrahydrofolate to 5,10-methenyltetrahydrofolate and then the hydrolysis of 5,10-methenyltetrahydrofolate to 10-formyltetrahydrofolate. The sequence is that of Bifunctional protein FolD 1 from Rhizorhabdus wittichii (strain DSM 6014 / CCUG 31198 / JCM 15750 / NBRC 105917 / EY 4224 / RW1) (Sphingomonas wittichii).